A 342-amino-acid polypeptide reads, in one-letter code: Holliday junction branch migration complex subunit RuvB (342 aa).

Positions Met-1–Tyr-185 are large ATPase domain (RuvB-L). ATP-binding positions include Leu-24, Arg-25, Gly-66, Lys-69, Thr-70, Ser-71, Glu-132–Tyr-134, Arg-175, Tyr-185, and Arg-222. Thr-70 is a Mg(2+) binding site. The tract at residues Gly-186–Glu-256 is small ATPAse domain (RuvB-S). The segment at Ala-259 to Val-342 is head domain (RuvB-H). DNA is bound by residues Arg-314 and Arg-319.

Belongs to the RuvB family. In terms of assembly, homohexamer. Forms an RuvA(8)-RuvB(12)-Holliday junction (HJ) complex. HJ DNA is sandwiched between 2 RuvA tetramers; dsDNA enters through RuvA and exits via RuvB. An RuvB hexamer assembles on each DNA strand where it exits the tetramer. Each RuvB hexamer is contacted by two RuvA subunits (via domain III) on 2 adjacent RuvB subunits; this complex drives branch migration. In the full resolvosome a probable DNA-RuvA(4)-RuvB(12)-RuvC(2) complex forms which resolves the HJ.

The protein localises to the cytoplasm. The enzyme catalyses ATP + H2O = ADP + phosphate + H(+). The RuvA-RuvB-RuvC complex processes Holliday junction (HJ) DNA during genetic recombination and DNA repair, while the RuvA-RuvB complex plays an important role in the rescue of blocked DNA replication forks via replication fork reversal (RFR). RuvA specifically binds to HJ cruciform DNA, conferring on it an open structure. The RuvB hexamer acts as an ATP-dependent pump, pulling dsDNA into and through the RuvAB complex. RuvB forms 2 homohexamers on either side of HJ DNA bound by 1 or 2 RuvA tetramers; 4 subunits per hexamer contact DNA at a time. Coordinated motions by a converter formed by DNA-disengaged RuvB subunits stimulates ATP hydrolysis and nucleotide exchange. Immobilization of the converter enables RuvB to convert the ATP-contained energy into a lever motion, pulling 2 nucleotides of DNA out of the RuvA tetramer per ATP hydrolyzed, thus driving DNA branch migration. The RuvB motors rotate together with the DNA substrate, which together with the progressing nucleotide cycle form the mechanistic basis for DNA recombination by continuous HJ branch migration. Branch migration allows RuvC to scan DNA until it finds its consensus sequence, where it cleaves and resolves cruciform DNA. This is Holliday junction branch migration complex subunit RuvB from Anaeromyxobacter dehalogenans (strain 2CP-C).